A 236-amino-acid chain; its full sequence is MTTPHINAVDGAFAETVLMPGDPLRAKYIAENFLKDAVQVTDVRNMLGFTGTYKGKRVSVMGSGMGIPSCSIYATELFREYGVQNIIRVGSCGAVSRDIKLRDVIIGMGASTDSKANRIRFKGHDFAAIASYELLEKAVNAARALGIKARVGNIFSADTFYTPEPEVFDTLEKYNILGVEMEAAGLYGVAAEEGKNALCILTVSDHIRTGEKTTSDERQSSFNEMLIIALDSIVAE.

Histidine 5 is an a purine D-ribonucleoside binding site. Phosphate contacts are provided by residues glycine 21, arginine 25, arginine 44, and arginine 88–serine 91. A purine D-ribonucleoside is bound by residues glutamate 180–glutamate 182 and serine 204–aspartate 205. Catalysis depends on aspartate 205, which acts as the Proton donor.

It belongs to the PNP/UDP phosphorylase family. Homohexamer; trimer of homodimers.

The catalysed reaction is a purine D-ribonucleoside + phosphate = a purine nucleobase + alpha-D-ribose 1-phosphate. The enzyme catalyses a purine 2'-deoxy-D-ribonucleoside + phosphate = a purine nucleobase + 2-deoxy-alpha-D-ribose 1-phosphate. Catalyzes the reversible phosphorolytic breakdown of the N-glycosidic bond in the beta-(deoxy)ribonucleoside molecules, with the formation of the corresponding free purine bases and pentose-1-phosphate. The sequence is that of Purine nucleoside phosphorylase DeoD-type from Psychromonas ingrahamii (strain DSM 17664 / CCUG 51855 / 37).